The primary structure comprises 548 residues: MFS-rype transporter paaT (548 aa).

The segment covering 1–10 (MEAPRSDQAH) has biased composition (basic and acidic residues). Positions 1–32 (MEAPRSDQAHTDATTPMEAIRTTSLGTNNYGP) are disordered. A compositionally biased stretch (polar residues) spans 21 to 30 (RTTSLGTNNY). N70 and N93 each carry an N-linked (GlcNAc...) asparagine glycan. Transmembrane regions (helical) follow at residues 100–120 (WYCTMVVAFTCFVVAFCSSVI), 139–159 (LVVITVFVIGFGLGPMVFAPM), 174–194 (ALAVIFVIPCAVSKNIGTLIV), 197–217 (LIDGIAFSAPMTLVGGTLADL), 224–244 (GVPMAAFSAAPFIGPAIGPLV), 256–276 (WLYWIQLILAFVAWVMITFTV), 332–352 (IVLFISLYMSVIYGLLYMFFV), 370–390 (GLMFIPLAIGVIFSACCAPFV), 411–431 (LIPMMWACWCIPSGLFVFAWT), 436–456 (LHWMGPAMGGFLIGVGVILLY), 471–493 (AASALAAKTFIRSIWGACTVLFT), and 505–525 (ASTLLAFIGLACCAIPYVFYF). Residues 258–269 (YWIQLILAFVAW) carry the Peroxisomal targeting signal motif.

Belongs to the major facilitator superfamily. DHA1 family. Polyamines/proton antiporter (TC 2.A.1.2.16) subfamily.

It is found in the peroxisome membrane. Functionally, MFS-type transporter involved in penicillin production, most likely through the translocation of side-chain precursors (phenylacetic acid and phenoxyacetic acid) from the cytosol to the peroxisomal lumen across the peroxisomal membrane. The sequence is that of MFS-rype transporter paaT from Penicillium rubens (strain ATCC 28089 / DSM 1075 / NRRL 1951 / Wisconsin 54-1255) (Penicillium chrysogenum).